A 269-amino-acid chain; its full sequence is Lipid II flippase Amj (269 aa).

Transmembrane regions (helical) follow at residues 1-21, 31-51, 84-104, 105-125, 161-181, 192-212, and 245-265; these read MHVI…IHSI, SGAR…MVIV, FLIF…PSFV, ALFS…FQVF, LFVI…SALY, TAVM…AIFV, and VAGT…IAWL.

The protein belongs to the Amj family.

It is found in the cell membrane. Its pathway is cell wall biogenesis; peptidoglycan biosynthesis. Its function is as follows. Involved in peptidoglycan biosynthesis. Transports lipid-linked peptidoglycan precursors from the inner to the outer leaflet of the cytoplasmic membrane. May serve as a defense mechanism against naturally occurring MurJ antagonists. The polypeptide is Lipid II flippase Amj (Bacillus subtilis (strain 168)).